Reading from the N-terminus, the 473-residue chain is Uronate isomerase (473 aa).

The protein belongs to the metallo-dependent hydrolases superfamily. Uronate isomerase family.

The catalysed reaction is D-glucuronate = D-fructuronate. It catalyses the reaction aldehydo-D-galacturonate = keto-D-tagaturonate. It functions in the pathway carbohydrate metabolism; pentose and glucuronate interconversion. This is Uronate isomerase (uxaC) from Geobacillus stearothermophilus (Bacillus stearothermophilus).